The chain runs to 145 residues: AP-2 complex subunit sigma (145 aa).

This sequence belongs to the adaptor complexes small subunit family. Adaptor protein complex 2 (AP-2) is a heterotetramer composed of two large adaptins (alpha-type subunit apl3 and beta-type subunit apl1), a medium chain (mu-type subunit apm4) and a small adaptin (sigma-type subunit aps2).

The protein localises to the cell membrane. Its subcellular location is the membrane. It localises to the coated pit. Component of the adaptor complexes which link clathrin to receptors in coated vesicles. Clathrin-associated protein complexes are believed to interact with the cytoplasmic tails of membrane proteins, leading to their selection and concentration. This is AP-2 complex subunit sigma (aps2) from Aspergillus fumigatus (strain ATCC MYA-4609 / CBS 101355 / FGSC A1100 / Af293) (Neosartorya fumigata).